The chain runs to 2670 residues: Inositol 1,4,5-trisphosphate-gated calcium channel ITPR3 (2670 aa).

The Cytoplasmic portion of the chain corresponds to 1-2233; that stretch reads MNEMSSFLHI…YVEGASTGVL (2233 aa). MIR domains are found at residues 113-173, 174-224, 232-288, 295-372, and 378-434; these read GDVV…LRSN, GDNV…INLF, EEVL…VEVV, GGAG…LDPT, and DSFV…IVSV. Residues R266, L269, and R270 each coordinate 1D-myo-inositol 1,4,5-trisphosphate. Positions 503, 507, 510, 567, 568, and 569 each coordinate 1D-myo-inositol 1,4,5-trisphosphate. R743 lines the Ca(2+) pocket. A phosphoserine mark is found at S916 and S934. Positions 1122 and 1125 each coordinate Ca(2+). Residues 1138-1153 show a composition bias toward basic and acidic residues; that stretch reads EVEAGATKDKKERPSD. Disordered regions lie at residues 1138-1164 and 1807-1835; these read EVEAGATKDKKERPSDEEGFLQPHGEK and NMSDLGSQPREDREPADPATKGRVSSFSM. 3 positions are modified to phosphoserine: S1813, S1832, and S1834. 2 residues coordinate Ca(2+): E1881 and E1945. The ATP site is built by A1995, E2148, and K2151. Residues 2234–2254 traverse the membrane as a helical segment; it reads GSPLISLLFWILICFSIAALF. Residues 2255-2262 are Extracellular-facing; that stretch reads TKRYSVRP. Residues 2263 to 2283 form a helical membrane-spanning segment; it reads LIVALILRSIYYLGIGPTLNI. Residues 2284-2292 are Cytoplasmic-facing; it reads LGALNLTNK. A helical membrane pass occupies residues 2293-2310; it reads IVFVVSFVGNRGTFIRGY. The Extracellular segment spans residues 2311-2324; that stretch reads KAMVMDMEFLYHVG. Residues 2325–2345 form a helical membrane-spanning segment; the sequence is YILTSVLGLFAHELFYSILLF. At 2346–2367 the chain is on the cytoplasmic side; sequence DLIYREETLFNVIKSVTRNGRS. Residues 2368–2388 form a helical membrane-spanning segment; that stretch reads ILLTALLALILVYLFSIVGFL. The Extracellular segment spans residues 2389-2495; sequence FLKDDFILEV…ESLFPARVVY (107 aa). C2454 and C2460 form a disulfide bridge. Residues 2496 to 2516 form a helical membrane-spanning segment; sequence DLLFFFIVIIIVLNLIFGVII. Topologically, residues 2517–2670 are cytoplasmic; it reads DTFADLRSEK…FVDVQNCMSR (154 aa). ATP-binding residues include C2537 and F2538. Position 2537 (C2537) interacts with Zn(2+). Residues C2540 and H2557 each contribute to the Zn(2+) site. ATP-binding residues include K2559, H2562, N2563, and M2564. H2562 serves as a coordination point for Zn(2+). Residue T2580 coordinates Ca(2+). S2608 and S2669 each carry phosphoserine.

The protein belongs to the InsP3 receptor family. In terms of assembly, homodimer. Homotetramer. Interacts with TRPC1, TRPC3, TRPC4. Interacts with TRPV4. Interacts with SIGMAR1. Found in a complex with AKT1 and PML; this interaction modulates IP3R3-phosphorylation and in turn ITPR3-dependent calcium release. Interacts with IRAG2 (via coiled-coil domain). Interacts with CABP1. Interacts with TMBIM4/LFG4. Interacts with CEMIP. Interacts with TESPA1. Interacts with TMEM203. Interacts with BOK; regulates ITPR3 expression. Interacts with BCL2L10. Interacts with CHGA and CHGB. Phosphorylated by AKT1 on serine and/or threonine residues.

Its subcellular location is the endoplasmic reticulum membrane. It is found in the cytoplasmic vesicle. The protein localises to the secretory vesicle membrane. The enzyme catalyses Ca(2+)(in) = Ca(2+)(out). With respect to regulation, inositol 1,4,5-trisphosphate-gated calcium channel is regulated by cytosolic calcium in a biphasic manner. At low concentrations, cytosolic calcium binds at a high-affinity juxtamembrane domain (JD) calcium binding site, allowing ITPR3 to activate by escaping a low-energy resting state through an ensemble of preactivated states. At high cytosolic calcium concentrations, ITPR3 preferentially enters an inhibited state stabilized by calcium binding at a second, low-affinity cytoplasmic domain (CD) calcium binding site. Inositol 1,4,5-trisphosphate-gated calcium channel that, upon 1D-myo-inositol 1,4,5-trisphosphate binding, transports calcium from the endoplasmic reticulum lumen to cytoplasm, thus releasing the intracellular calcium and therefore participates in cellular calcium ion homeostasis. 1D-myo-inositol 1,4,5-trisphosphate binds to the ligand-free channel without altering its global conformation, yielding the low-energy resting state, then progresses through resting-to preactivated transitions to the higher energy preactivated state, which increases affinity for calcium, promoting binding of the low basal cytosolic calcium at the juxtamembrane domain (JD) site, favoring the transition through the ensemble of high-energy intermediate states along the trajectory to the fully-open activated state. Upon opening, releases calcium in the cytosol where it can bind to the low-affinity cytoplasmic domain (CD) site and stabilizes the inhibited state to terminate calcium release. The polypeptide is Inositol 1,4,5-trisphosphate-gated calcium channel ITPR3 (Mus musculus (Mouse)).